The primary structure comprises 128 residues: Ribonuclease P protein component (128 aa).

The protein belongs to the RnpA family. In terms of assembly, consists of a catalytic RNA component (M1 or rnpB) and a protein subunit.

The catalysed reaction is Endonucleolytic cleavage of RNA, removing 5'-extranucleotides from tRNA precursor.. Functionally, RNaseP catalyzes the removal of the 5'-leader sequence from pre-tRNA to produce the mature 5'-terminus. It can also cleave other RNA substrates such as 4.5S RNA. The protein component plays an auxiliary but essential role in vivo by binding to the 5'-leader sequence and broadening the substrate specificity of the ribozyme. This Parasynechococcus marenigrum (strain WH8102) protein is Ribonuclease P protein component.